Here is a 408-residue protein sequence, read N- to C-terminus: Acetylornithine/succinyldiaminopimelate aminotransferase (408 aa).

Pyridoxal 5'-phosphate contacts are provided by residues 108-109 (GA) and Phe-141. Arg-144 is a binding site for N(2)-acetyl-L-ornithine. Position 226-229 (226-229 (DEIQ)) interacts with pyridoxal 5'-phosphate. Lys-255 bears the N6-(pyridoxal phosphate)lysine mark. Residue Thr-283 participates in N(2)-acetyl-L-ornithine binding. Residue Thr-284 coordinates pyridoxal 5'-phosphate.

The protein belongs to the class-III pyridoxal-phosphate-dependent aminotransferase family. ArgD subfamily. Homodimer. Pyridoxal 5'-phosphate serves as cofactor.

It is found in the cytoplasm. The catalysed reaction is N(2)-acetyl-L-ornithine + 2-oxoglutarate = N-acetyl-L-glutamate 5-semialdehyde + L-glutamate. It catalyses the reaction N-succinyl-(2S,6S)-2,6-diaminopimelate + 2-oxoglutarate = (S)-2-succinylamino-6-oxoheptanedioate + L-glutamate. It participates in amino-acid biosynthesis; L-arginine biosynthesis; N(2)-acetyl-L-ornithine from L-glutamate: step 4/4. Its pathway is amino-acid biosynthesis; L-lysine biosynthesis via DAP pathway; LL-2,6-diaminopimelate from (S)-tetrahydrodipicolinate (succinylase route): step 2/3. Involved in both the arginine and lysine biosynthetic pathways. The protein is Acetylornithine/succinyldiaminopimelate aminotransferase of Buchnera aphidicola subsp. Acyrthosiphon pisum (strain APS) (Acyrthosiphon pisum symbiotic bacterium).